Reading from the N-terminus, the 613-residue chain is 4-hydroxy-3-methylbut-2-en-1-yl diphosphate synthase (flavodoxin) (613 aa).

[4Fe-4S] cluster-binding residues include Cys-521, Cys-524, Cys-555, and Glu-562.

It belongs to the IspG family. It depends on [4Fe-4S] cluster as a cofactor.

The enzyme catalyses (2E)-4-hydroxy-3-methylbut-2-enyl diphosphate + oxidized [flavodoxin] + H2O + 2 H(+) = 2-C-methyl-D-erythritol 2,4-cyclic diphosphate + reduced [flavodoxin]. Its pathway is isoprenoid biosynthesis; isopentenyl diphosphate biosynthesis via DXP pathway; isopentenyl diphosphate from 1-deoxy-D-xylulose 5-phosphate: step 5/6. Its function is as follows. Converts 2C-methyl-D-erythritol 2,4-cyclodiphosphate (ME-2,4cPP) into 1-hydroxy-2-methyl-2-(E)-butenyl 4-diphosphate. This is 4-hydroxy-3-methylbut-2-en-1-yl diphosphate synthase (flavodoxin) from Bacteroides thetaiotaomicron (strain ATCC 29148 / DSM 2079 / JCM 5827 / CCUG 10774 / NCTC 10582 / VPI-5482 / E50).